The chain runs to 232 residues: Ubiquinone biosynthesis O-methyltransferase (232 aa).

S-adenosyl-L-methionine is bound by residues Arg-36, Gly-55, Asp-76, and Leu-120.

The protein belongs to the methyltransferase superfamily. UbiG/COQ3 family.

It carries out the reaction a 3-demethylubiquinol + S-adenosyl-L-methionine = a ubiquinol + S-adenosyl-L-homocysteine + H(+). It catalyses the reaction a 3-(all-trans-polyprenyl)benzene-1,2-diol + S-adenosyl-L-methionine = a 2-methoxy-6-(all-trans-polyprenyl)phenol + S-adenosyl-L-homocysteine + H(+). It functions in the pathway cofactor biosynthesis; ubiquinone biosynthesis. In terms of biological role, O-methyltransferase that catalyzes the 2 O-methylation steps in the ubiquinone biosynthetic pathway. This Azotobacter vinelandii (strain DJ / ATCC BAA-1303) protein is Ubiquinone biosynthesis O-methyltransferase.